The sequence spans 431 residues: SH2 domain-containing protein 4B (431 aa).

Positions 201–235 (QASENEEREWEEQLRRSKAADEERSRRAQRARDEY) are disordered. Basic and acidic residues predominate over residues 211 to 235 (EEQLRRSKAADEERSRRAQRARDEY). Residues 325–417 (WFHGIISRES…SGGELLQEPC (93 aa)) form the SH2 domain.

The polypeptide is SH2 domain-containing protein 4B (Sh2d4b) (Mus musculus (Mouse)).